Here is a 2670-residue protein sequence, read N- to C-terminus: Inositol 1,4,5-trisphosphate-gated calcium channel ITPR3 (2670 aa).

Residues 1-2201 lie on the Cytoplasmic side of the membrane; it reads MNEMSSFLHI…LIYWFSRRMT (2201 aa). MIR domains lie at 113 to 173, 174 to 224, 232 to 288, 295 to 372, and 378 to 434; these read GDVV…LRSN, GDNV…INLF, EEVL…VEVV, GGAG…LDPT, and DSFV…IVSV. Positions 266, 268, 269, and 270 each coordinate 1D-myo-inositol 1,4,5-trisphosphate. Residues 321–344 are disordered; that stretch reads PSYKGDVSDPKAAGPGAQSRTGRR. 1D-myo-inositol 1,4,5-trisphosphate contacts are provided by arginine 503, lysine 507, arginine 510, tyrosine 567, arginine 568, and lysine 569. Arginine 743 lines the Ca(2+) pocket. Serine 916 and serine 934 each carry phosphoserine. 2 residues coordinate Ca(2+): glutamate 1122 and glutamate 1125. Positions 1134-1153 are enriched in basic and acidic residues; sequence VKGEEGEAGASKDKKERPSD. 2 disordered regions span residues 1134-1164 and 1807-1849; these read VKGEEGEAGASKDKKERPSDEEGFLQPHGEK and NMSD…GLHR. Phosphoserine is present on residues serine 1813, serine 1832, and serine 1834. Over residues 1831–1842 the composition is skewed to low complexity; the sequence is SSFSMPSSSRYS. Ca(2+)-binding residues include glutamate 1881 and glutamate 1945. Residues alanine 1995, glutamate 2148, and lysine 2151 each coordinate ATP. The helical transmembrane segment at 2202-2222 threads the bilayer; the sequence is LWGSISFNLAVFINIIIAFFY. The Extracellular segment spans residues 2223–2233; the sequence is PYVEGASTGVL. A helical membrane pass occupies residues 2234 to 2254; sequence GSPLISLLFWILICFSIAALF. Residues 2255–2263 lie on the Cytoplasmic side of the membrane; it reads TKHYSVRPL. Residues 2264–2284 traverse the membrane as a helical segment; the sequence is IVALVLRSIYYLGIGPTLNIL. The Extracellular segment spans residues 2285 to 2324; it reads GALNLTNKIVFVVSFVGNRGTFIRGYKAMVMDMEFLYHVG. Residues 2325 to 2345 form a helical membrane-spanning segment; the sequence is YILTSVLGLFAHELFYSILLF. Over 2346 to 2367 the chain is Cytoplasmic; the sequence is DLIYREETLFNVIKSVTRNGRS. A helical membrane pass occupies residues 2368 to 2388; the sequence is ILLTALLALILVYLFSIVGFL. Over 2389-2495 the chain is Extracellular; sequence FLKDDFILEV…ESLFPARVVY (107 aa). Cysteine 2454 and cysteine 2460 are joined by a disulfide. The helical transmembrane segment at 2496-2516 threads the bilayer; the sequence is DLLFFFIVIIIVLNLIFGVII. Over 2517 to 2670 the chain is Cytoplasmic; the sequence is DTFADLRSEK…FVDVQNCMSR (154 aa). The ATP site is built by cysteine 2537 and phenylalanine 2538. Position 2537 (cysteine 2537) interacts with Zn(2+). Positions 2540 and 2557 each coordinate Zn(2+). ATP contacts are provided by lysine 2559, histidine 2562, asparagine 2563, and methionine 2564. Histidine 2562 serves as a coordination point for Zn(2+). Threonine 2580 is a Ca(2+) binding site. Phosphoserine occurs at positions 2608 and 2669.

It belongs to the InsP3 receptor family. As to quaternary structure, homotetramer. Homodimer. Interacts with TRPC1 and TRPC3. Interacts with TRPC4. Interacts with TRPV4. Interacts with SIGMAR1. Interacts with AKT1 and PML. Interacts with IRAG2 (via coiled-coil domain). Interacts with CABP1. Interacts with TMBIM4/LFG4. Interacts with CEMIP. Interacts with TESPA1. Interacts with TMEM203. Interacts with BOK; regulates ITPR3 expression. Interacts with BCL2L10. Interacts with CHGA and CHGB. Post-translationally, phosphorylated by AKT1 on serine and/or threonine residues.

It localises to the endoplasmic reticulum membrane. The protein resides in the cytoplasmic vesicle. Its subcellular location is the secretory vesicle membrane. It catalyses the reaction Ca(2+)(in) = Ca(2+)(out). Its activity is regulated as follows. Inositol 1,4,5-trisphosphate-gated calcium channel is regulated by cytosolic calcium in a biphasic manner. At low concentrations, cytosolic calcium binds at a high-affinity juxtamembrane domain (JD) calcium binding site, allowing ITPR3 to activate by escaping a low-energy resting state through an ensemble of preactivated states. At high cytosolic calcium concentrations, ITPR3 preferentially enters an inhibited state stabilized by calcium binding at a second, low-affinity cytoplasmic domain (CD) calcium binding site. Its function is as follows. Inositol 1,4,5-trisphosphate-gated calcium channel that, upon 1D-myo-inositol 1,4,5-trisphosphate binding, transports calcium from the endoplasmic reticulum lumen to cytoplasm, thus releasing the intracellular calcium and therefore participates in cellular calcium ion homeostasis. 11D-myo-inositol 1,4,5-trisphosphate binds to the ligand-free channel without altering its global conformation, yielding the low-energy resting state, then progresses through resting-to preactivated transitions to the higher energy preactivated state, which increases affinity for calcium, promoting binding of the low basal cytosolic calcium at the juxtamembrane domain (JD) site, favoring the transition through the ensemble of high-energy intermediate states along the trajectory to the fully-open activated state. Upon opening, releases calcium in the cytosol where it can bind to the low-affinity cytoplasmic domain (CD) site and stabilizes the inhibited state to terminate calcium release. The polypeptide is Inositol 1,4,5-trisphosphate-gated calcium channel ITPR3 (Rattus norvegicus (Rat)).